Consider the following 372-residue polypeptide: Citrate synthase 2 (372 aa).

The active site involves H257. At S284 the chain carries Phosphoserine. Residue D308 is part of the active site.

The protein belongs to the citrate synthase family. Homodimer.

The enzyme catalyses oxaloacetate + acetyl-CoA + H2O = citrate + CoA + H(+). Its pathway is carbohydrate metabolism; tricarboxylic acid cycle; isocitrate from oxaloacetate: step 1/2. Its function is as follows. Might regulate the synthesis and function of enzymes involved in later enzymatic steps of Krebs cycle. Loss in activity results in sporulation defect. This chain is Citrate synthase 2 (citZ), found in Bacillus subtilis (strain 168).